A 598-amino-acid polypeptide reads, in one-letter code: Beta-galactosidase (598 aa).

Positions 1-21 (MLRTTLAPLVLALALALPAAA) are cleaved as a signal peptide. The Proton donor role is filled by E184. E260 (nucleophile) is an active-site residue.

It belongs to the glycosyl hydrolase 35 family.

The enzyme catalyses Hydrolysis of terminal non-reducing beta-D-galactose residues in beta-D-galactosides.. Its function is as follows. Preferentially hydrolyzes beta(1-&gt;3) galactosyl linkages over beta(1-&gt;4) linkages. The sequence is that of Beta-galactosidase (bga) from Xanthomonas manihotis.